Consider the following 320-residue polypeptide: Atrochrysone carboxyl ACP thioesterase (320 aa).

Residues His103, His105, Asp107, and His108 each coordinate Zn(2+). The active-site Proton donor/acceptor is Asp107.

The protein belongs to the metallo-beta-lactamase superfamily. Requires Zn(2+) as cofactor.

The catalysed reaction is atrochrysone carboxyl-[ACP] + H2O = atrochrysone carboxylate + holo-[ACP] + H(+). The protein operates within secondary metabolite biosynthesis. Atrochrysone carboxyl ACP thioesterase; part of the gene cluster that mediates the biosynthesis of geodin, an intermediate in the biosynthesis of other natural products. The pathway begins with the synthesis of atrochrysone thioester by the polyketide synthase (PKS) gedC. The atrochrysone carboxyl ACP thioesterase gedB then breaks the thioester bond and releases the atrochrysone carboxylic acid from gedC. The atrochrysone carboxylic acid is then converted to atrochrysone which is further transformed into emodinanthrone. The next step is performed by the emodinanthrone oxygenase gedH that catalyzes the oxidation of emodinanthrone to emodin. Emodin O-methyltransferase encoded probably by gedA then catalyzes methylation of the 8-hydroxy group of emodin to form questin. Ring cleavage of questin by questin oxidase gedK leads to desmethylsulochrin via several intermediates including questin epoxide. Another methylation step probably catalyzed by methyltransferase gedG leads to the formation of sulochrin which is further converted to dihydrogeodin by the sulochrin halogenase gedL. Finally, the dihydrogeodin oxidase gedJ catalyzes the stereospecific phenol oxidative coupling reaction converting dihydrogeodin to geodin. The chain is Atrochrysone carboxyl ACP thioesterase from Aspergillus terreus (strain NIH 2624 / FGSC A1156).